Here is a 628-residue protein sequence, read N- to C-terminus: Beta-galactosidase large subunit (628 aa).

E468 functions as the Proton donor in the catalytic mechanism. The active-site Nucleophile is the E536.

The protein belongs to the glycosyl hydrolase 2 family. As to quaternary structure, heterodimer of a large (LacL) and a small subunit (LacM).

The catalysed reaction is Hydrolysis of terminal non-reducing beta-D-galactose residues in beta-D-galactosides.. Component of a beta-galactosidase. The protein is Beta-galactosidase large subunit (lacL) of Lactobacillus acidophilus (strain ATCC 700396 / NCK56 / N2 / NCFM).